Here is a 179-residue protein sequence, read N- to C-terminus: Large ribosomal subunit protein uL5 (179 aa).

The protein belongs to the universal ribosomal protein uL5 family. As to quaternary structure, part of the 50S ribosomal subunit; part of the 5S rRNA/L5/L18/L25 subcomplex. Contacts the 5S rRNA and the P site tRNA. Forms a bridge to the 30S subunit in the 70S ribosome.

Functionally, this is one of the proteins that bind and probably mediate the attachment of the 5S RNA into the large ribosomal subunit, where it forms part of the central protuberance. In the 70S ribosome it contacts protein S13 of the 30S subunit (bridge B1b), connecting the 2 subunits; this bridge is implicated in subunit movement. Contacts the P site tRNA; the 5S rRNA and some of its associated proteins might help stabilize positioning of ribosome-bound tRNAs. This chain is Large ribosomal subunit protein uL5, found in Lysinibacillus sphaericus (strain C3-41).